Here is a 465-residue protein sequence, read N- to C-terminus: Mothers against decapentaplegic homolog 5 (465 aa).

At T2 the chain carries N-acetylthreonine. Positions 13 to 137 (PAVKRLLGWK…YKRVESPVLP (125 aa)) constitute an MH1 domain. Residues C65, C110, C122, and H127 each coordinate Zn(2+). Residues 163 to 243 (NEPHMPQNAT…GQDNSQPMDT (81 aa)) form a disordered region. The segment covering 169–182 (QNATFPDSFHQPNS) has biased composition (polar residues). Pro residues predominate over residues 186-197 (PLSPNSPYPPSP). A compositionally biased stretch (low complexity) spans 198 to 214 (ASSTYPNSPASSGPGSP). Residues 234-243 (GQDNSQPMDT) show a composition bias toward polar residues. The region spanning 271–465 (WCSIVYYELN…SPLNPISSVS (195 aa)) is the MH2 domain. 2 positions are modified to phosphoserine: S463 and S465.

Belongs to the dwarfin/SMAD family. In terms of assembly, homodimer. Forms trimers with the co-SMAD SMAD4. Interacts with PEBP2-alpha subunit and SMURF1. Interacts with SUV39H1 and SUV39H2. Interacts (via MH2 domain) with LEMD3. Interacts with WWP1. Interacts with TMEM119. Interacts with ZNF8. Interacts with RANBP3L. Interacts with HK1. Interacts with HGS; this interaction attenuates BMP signaling. Phosphorylated on serine by BMP (bone morphogenetic proteins) type 1 receptor kinase. Post-translationally, ubiquitin-mediated proteolysis by SMAD-specific E3 ubiquitin ligase SMURF1.

The protein resides in the cytoplasm. It localises to the nucleus. The protein localises to the mitochondrion. Its function is as follows. Transcriptional regulator that plays a role in various cellular processes including embryonic development, cell differentiation, angiogenesis and tissue homeostasis. Upon BMP ligand binding to their receptors at the cell surface, is phosphorylated by activated type I BMP receptors (BMPRIs) and associates with SMAD4 to form a heteromeric complex which translocates into the nucleus acting as transcription factor. In turn, the hetero-trimeric complex recognizes cis-regulatory elements containing Smad Binding Elements (SBEs) to modulate the outcome of the signaling network. Non-phosphorylated SMAD5 has a cytoplasmic role in energy metabolism regulation by promoting mitochondrial respiration and glycolysis in response to cytoplasmic pH changes. Mechanistically, interacts with hexokinase 1/HK1 and thereby accelerates glycolysis. This is Mothers against decapentaplegic homolog 5 (Smad5) from Rattus norvegicus (Rat).